The following is a 431-amino-acid chain: Intraflagellar transport protein 38 (431 aa).

The stretch at 177–218 (SAAVQQRIKNLAAECNTLQEEVTTNKREKAKLEEQITQKKQS) forms a coiled coil. The disordered stretch occupies residues 346–431 (INTNAEIPDD…EELDPDNIEF (86 aa)). Over residues 352–370 (IPDDESYSYSYEEEEEEEQ) the composition is skewed to acidic residues. The span at 384-405 (PETHSNGEKHRGLDELSHKSNE) shows a compositional bias: basic and acidic residues. Residues 420–431 (GGEELDPDNIEF) show a composition bias toward acidic residues.

Belongs to the CLUAP1 family.

It is found in the cell projection. The protein localises to the cilium. The protein resides in the flagellum. Its subcellular location is the cytoplasm. It localises to the cytoskeleton. It is found in the flagellum axoneme. The protein localises to the flagellum basal body. Component of the intraflagellar transport complex B (IFT-B) involved in flagellar assembly. This chain is Intraflagellar transport protein 38, found in Giardia intestinalis (strain ATCC 50803 / WB clone C6) (Giardia lamblia).